Consider the following 506-residue polypeptide: TOM1-like protein 3 (506 aa).

The region spanning 12-141 is the VHS domain; it reads ATNDMLIGPD…ELRSAGIEFP (130 aa). A GAT domain is found at 180 to 268; it reads DASALSMEEI…VLQHHDDKAK (89 aa). Disordered regions lie at residues 266–328, 351–384, and 398–477; these read KAKG…PPSS, ETFENVKPPSTSQSSNHDYSAPIFDEPVPQSKSP, and EQLP…PEDI. Acidic residues predominate over residues 288–298; that stretch reads DDDDDESDDDF. Phosphoserine is present on Ser-294. Over residues 358–368 the composition is skewed to polar residues; sequence PPSTSQSSNHD. At Ser-383 the chain carries Phosphoserine. The span at 450 to 460 shows a compositional bias: polar residues; the sequence is QSRNLSLNPTA. Basic and acidic residues predominate over residues 468–477; sequence PKKDDKPEDI.

This sequence belongs to the TOM1 family. As to expression, preferentially expressed in cauline leaves.

The protein localises to the membrane. Might contribute to the loading of the ESCRT machinery. This is TOM1-like protein 3 from Arabidopsis thaliana (Mouse-ear cress).